Here is a 194-residue protein sequence, read N- to C-terminus: Glycerol-3-phosphate acyltransferase (194 aa).

Transmembrane regions (helical) follow at residues 4 to 24 (ELILTAVAYIVGSIPTGLLLA), 80 to 100 (WVAAVGLAAFLGHVYTIFLGF), 112 to 132 (VFLGVSPLSVLGALALFIGIV), 137 to 157 (YISLGSIIAAAAMPLFVAAVE), and 161 to 181 (LLVGMTLVIAVIVIVKHRENI).

Belongs to the PlsY family. As to quaternary structure, probably interacts with PlsX.

Its subcellular location is the cell inner membrane. The enzyme catalyses an acyl phosphate + sn-glycerol 3-phosphate = a 1-acyl-sn-glycero-3-phosphate + phosphate. It participates in lipid metabolism; phospholipid metabolism. Its function is as follows. Catalyzes the transfer of an acyl group from acyl-phosphate (acyl-PO(4)) to glycerol-3-phosphate (G3P) to form lysophosphatidic acid (LPA). This enzyme utilizes acyl-phosphate as fatty acyl donor, but not acyl-CoA or acyl-ACP. This Geobacter sulfurreducens (strain ATCC 51573 / DSM 12127 / PCA) protein is Glycerol-3-phosphate acyltransferase.